The chain runs to 221 residues: GTP cyclohydrolase III (221 aa).

This sequence belongs to the archaeal-type GTP cyclohydrolase family.

The enzyme catalyses GTP + 3 H2O = 2-amino-5-formylamino-6-(5-phospho-D-ribosylamino)pyrimidin-4(3H)-one + 2 phosphate + 2 H(+). In terms of biological role, catalyzes the formation of 2-amino-5-formylamino-6-ribofuranosylamino-4(3H)-pyrimidinone ribonucleotide monophosphate and inorganic phosphate from GTP. Also has an independent pyrophosphate phosphohydrolase activity. In Pyrobaculum islandicum (strain DSM 4184 / JCM 9189 / GEO3), this protein is GTP cyclohydrolase III.